The chain runs to 356 residues: Vanillin synthase, chloroplastic (356 aa).

An N-linked (GlcNAc...) asparagine glycan is attached at asparagine 122. Disulfide bonds link cysteine 159–cysteine 202 and cysteine 193–cysteine 235. The active site involves cysteine 162. Asparagine 251 carries N-linked (GlcNAc...) asparagine glycosylation. An intrachain disulfide couples cysteine 293 to cysteine 343. Residues histidine 302 and asparagine 322 contribute to the active site.

The protein belongs to the peptidase C1 family. As to quaternary structure, forms homodimers, homotrimers and homotetramers. In terms of tissue distribution, accumulates in the inner part of vanilla pods (at protein level). Expressed in single cells located a few cell layers from the inner epidermis.

It localises to the plastid. Its subcellular location is the chloroplast. The catalysed reaction is (E)-ferulate + H2O = vanillin + acetate. It carries out the reaction 4-O-beta-D-glucosyl-trans-ferulate + H2O = 4-O-beta-D-glucosyl-vanillin + acetate. It functions in the pathway aromatic compound metabolism; phenylpropanoid biosynthesis. Its function is as follows. Involved in the biosynthesis of vanillin (4-hydroxy-3-methoxy-benzaldehyde) and derivative natural products, key components of vanilla pods flavor. Catalyzes the double carbon bond cleavage of ferulic acid to vanillin and of their respective glucosides via a coupled non-oxidative hydratase/lyase reaction. Inactive toward p-coumaric acid, caffeic acid and their glucosides derivatives. The chain is Vanillin synthase, chloroplastic from Vanilla planifolia (Vanilla).